A 1700-amino-acid polypeptide reads, in one-letter code: uncharacterized protein (1700 aa).

The helical transmembrane segment at 986-1006 (APITQYPVLCYLLYLLSYYLV) threads the bilayer. 2 coiled-coil regions span residues 1246–1278 (DQNA…REIK) and 1657–1684 (QDMD…IEGD). The segment at 1650 to 1700 (DTEPDIMQDMDGEPQEADELEDLKEEAESLDIEGDYFAEEDEDYAQEDFIE) is disordered. Over residues 1651–1700 (TEPDIMQDMDGEPQEADELEDLKEEAESLDIEGDYFAEEDEDYAQEDFIE) the composition is skewed to acidic residues.

It is found in the host membrane. The protein resides in the virion. This is an uncharacterized protein from Acanthamoeba polyphaga (Amoeba).